The sequence spans 346 residues: tRNA N6-adenosine threonylcarbamoyltransferase (346 aa).

Fe cation contacts are provided by H110 and H114. Residues L132 to G136, D165, G178, and N274 contribute to the substrate site. D298 serves as a coordination point for Fe cation.

The protein belongs to the KAE1 / TsaD family. It depends on Fe(2+) as a cofactor.

The protein resides in the cytoplasm. It carries out the reaction L-threonylcarbamoyladenylate + adenosine(37) in tRNA = N(6)-L-threonylcarbamoyladenosine(37) in tRNA + AMP + H(+). Its function is as follows. Required for the formation of a threonylcarbamoyl group on adenosine at position 37 (t(6)A37) in tRNAs that read codons beginning with adenine. Is involved in the transfer of the threonylcarbamoyl moiety of threonylcarbamoyl-AMP (TC-AMP) to the N6 group of A37, together with TsaE and TsaB. TsaD likely plays a direct catalytic role in this reaction. This Borreliella burgdorferi (strain ZS7) (Borrelia burgdorferi) protein is tRNA N6-adenosine threonylcarbamoyltransferase.